The primary structure comprises 325 residues: DNA-directed RNA polymerase subunit alpha (325 aa).

The segment at methionine 1–glutamate 231 is alpha N-terminal domain (alpha-NTD). Positions isoleucine 246–lysine 325 are alpha C-terminal domain (alpha-CTD).

It belongs to the RNA polymerase alpha chain family. In terms of assembly, homodimer. The RNAP catalytic core consists of 2 alpha, 1 beta, 1 beta' and 1 omega subunit. When a sigma factor is associated with the core the holoenzyme is formed, which can initiate transcription.

It catalyses the reaction RNA(n) + a ribonucleoside 5'-triphosphate = RNA(n+1) + diphosphate. DNA-dependent RNA polymerase catalyzes the transcription of DNA into RNA using the four ribonucleoside triphosphates as substrates. In Burkholderia multivorans (strain ATCC 17616 / 249), this protein is DNA-directed RNA polymerase subunit alpha.